Reading from the N-terminus, the 178-residue chain is Large ribosomal subunit protein bL25 (178 aa).

It belongs to the bacterial ribosomal protein bL25 family. CTC subfamily. Part of the 50S ribosomal subunit; part of the 5S rRNA/L5/L18/L25 subcomplex. Contacts the 5S rRNA. Binds to the 5S rRNA independently of L5 and L18.

Functionally, this is one of the proteins that binds to the 5S RNA in the ribosome where it forms part of the central protuberance. The protein is Large ribosomal subunit protein bL25 of Wolinella succinogenes (strain ATCC 29543 / DSM 1740 / CCUG 13145 / JCM 31913 / LMG 7466 / NCTC 11488 / FDC 602W) (Vibrio succinogenes).